Reading from the N-terminus, the 216-residue chain is RNA pyrophosphohydrolase (216 aa).

In terms of domain architecture, Nudix hydrolase spans 6 to 149 (GFRPNVGIIL…KRDVYQLALT (144 aa)). Residues 38-59 (GGIKYGETPMQAMYRELHEETG) carry the Nudix box motif. A disordered region spans residues 159 to 188 (AQRTDKSRGPRAPRYPRVANGHAASEAPAA).

It belongs to the Nudix hydrolase family. RppH subfamily. A divalent metal cation is required as a cofactor.

Accelerates the degradation of transcripts by removing pyrophosphate from the 5'-end of triphosphorylated RNA, leading to a more labile monophosphorylated state that can stimulate subsequent ribonuclease cleavage. The polypeptide is RNA pyrophosphohydrolase (Burkholderia mallei (strain NCTC 10247)).